A 1184-amino-acid polypeptide reads, in one-letter code: DNA-directed RNA polymerase subunit beta (1184 aa).

It belongs to the RNA polymerase beta chain family. As to quaternary structure, the RNAP catalytic core consists of 2 alpha, 1 beta, 1 beta' and 1 omega subunit. When a sigma factor is associated with the core the holoenzyme is formed, which can initiate transcription.

The catalysed reaction is RNA(n) + a ribonucleoside 5'-triphosphate = RNA(n+1) + diphosphate. In terms of biological role, DNA-dependent RNA polymerase catalyzes the transcription of DNA into RNA using the four ribonucleoside triphosphates as substrates. In Fusobacterium nucleatum subsp. nucleatum (strain ATCC 25586 / DSM 15643 / BCRC 10681 / CIP 101130 / JCM 8532 / KCTC 2640 / LMG 13131 / VPI 4355), this protein is DNA-directed RNA polymerase subunit beta.